The primary structure comprises 400 residues: Subtilisin-like protease 7 (400 aa).

The first 20 residues, 1–20 (MGFITKAIPLALAAASVING), serve as a signal peptide directing secretion. Residues 21 to 119 (AEILETRAGV…IERDARVQIN (99 aa)) constitute a propeptide that is removed on maturation. The 83-residue stretch at 36–118 (KYIVVMNDGI…YIERDARVQI (83 aa)) folds into the Inhibitor I9 domain. Residues 129–400 (SWGLARVGSK…SKLINNGSGM (272 aa)) enclose the Peptidase S8 domain. Active-site charge relay system residues include Asp161 and His192. Residues Asn222 and Asn252 are each glycosylated (N-linked (GlcNAc...) asparagine). Ser346 acts as the Charge relay system in catalysis. A glycan (N-linked (GlcNAc...) asparagine) is linked at Asn396.

This sequence belongs to the peptidase S8 family.

The protein localises to the secreted. Secreted subtilisin-like serine protease with keratinolytic activity that contributes to pathogenicity. The polypeptide is Subtilisin-like protease 7 (SUB7) (Trichophyton soudanense).